Reading from the N-terminus, the 198-residue chain is Large ribosomal subunit protein uL23c (198 aa).

The transit peptide at 1 to 76 (MATTAPNLHS…SFGRDLMVAQ (76 aa)) directs the protein to the chloroplast.

It belongs to the universal ribosomal protein uL23 family. Component of the chloroplast large ribosomal subunit (LSU). Mature 70S chloroplast ribosomes of higher plants consist of a small (30S) and a large (50S) subunit. The 30S small subunit contains 1 molecule of ribosomal RNA (16S rRNA) and 24 different proteins. The 50S large subunit contains 3 rRNA molecules (23S, 5S and 4.5S rRNA) and 33 different proteins.

It localises to the plastid. The protein resides in the chloroplast. In terms of biological role, component of the chloroplast ribosome (chloro-ribosome), a dedicated translation machinery responsible for the synthesis of chloroplast genome-encoded proteins, including proteins of the transcription and translation machinery and components of the photosynthetic apparatus. In Spinacia oleracea (Spinach), this protein is Large ribosomal subunit protein uL23c (RPL23).